The following is a 245-amino-acid chain: Ribosomal protein L11 methyltransferase (245 aa).

4 residues coordinate S-adenosyl-L-methionine: threonine 101, glycine 122, aspartate 144, and asparagine 184.

This sequence belongs to the methyltransferase superfamily. PrmA family.

The protein localises to the cytoplasm. It carries out the reaction L-lysyl-[protein] + 3 S-adenosyl-L-methionine = N(6),N(6),N(6)-trimethyl-L-lysyl-[protein] + 3 S-adenosyl-L-homocysteine + 3 H(+). In terms of biological role, methylates ribosomal protein L11. The sequence is that of Ribosomal protein L11 methyltransferase from Aquifex aeolicus (strain VF5).